A 152-amino-acid chain; its full sequence is Protein Smg homolog (152 aa).

The protein belongs to the Smg family.

This Nitrosomonas europaea (strain ATCC 19718 / CIP 103999 / KCTC 2705 / NBRC 14298) protein is Protein Smg homolog.